The chain runs to 617 residues: Thioredoxin reductase (617 aa).

FAD is bound by residues 127 to 128 (PG), 147 to 150 (DYVK), 163 to 164 (TC), 168 to 172 (GCVPK), alanine 237, aspartate 433, and 440 to 442 (ELA). Cysteines 164 and 169 form a disulfide. The tract at residues 514–528 (HRQKHIRAQKDEYDL) is loop important for the interaction with TRX1. Histidine 585 provides a ligand contact to FAD. The active-site Proton acceptor is histidine 585. An intrachain disulfide couples cysteine 611 to cysteine 616.

Belongs to the class-I pyridine nucleotide-disulfide oxidoreductase family. In terms of assembly, homodimer. Requires FAD as cofactor.

Its subcellular location is the mitochondrion. It is found in the cytoplasm. The enzyme catalyses [thioredoxin]-dithiol + NADP(+) = [thioredoxin]-disulfide + NADPH + H(+). Its function is as follows. Catalyzes the transfer of electrons from NADPH to thioredoxins TRX1, TRX2 and TRX3, which in turn act as reductants of disulfide containing proteins. Able to reduce nitroglutathione (GSNO), a compound involved in the transport of nitric oxide (NO); however, TRX1 is more efficient in reducing GSNO. Has no catalytic activity towards oxidized glutathione (GSSG). This chain is Thioredoxin reductase, found in Plasmodium falciparum (isolate 3D7).